The sequence spans 807 residues: Glycerol-3-phosphate acyltransferase (807 aa).

The HXXXXD motif signature appears at 308–313; sequence CHRSHM.

The protein belongs to the GPAT/DAPAT family.

The protein localises to the cell inner membrane. It carries out the reaction sn-glycerol 3-phosphate + an acyl-CoA = a 1-acyl-sn-glycero-3-phosphate + CoA. The protein operates within phospholipid metabolism; CDP-diacylglycerol biosynthesis; CDP-diacylglycerol from sn-glycerol 3-phosphate: step 1/3. In Shewanella amazonensis (strain ATCC BAA-1098 / SB2B), this protein is Glycerol-3-phosphate acyltransferase.